Consider the following 104-residue polypeptide: MESFTRAELVAQRDGVWAVCGEVFEAYEKCRMEKGSDPELCLRESTAVVGCSQKVMREIVKNCQKELNESVKCIEENNMRTIPCEEENKAFNECFDKLVAPKFL.

2 consecutive CHCH domains span residues Trp-17–Ile-59 and Val-60–Lys-102. 4 short sequence motifs (cx9C motif) span residues Cys-20–Cys-30, Cys-41–Cys-51, Cys-63–Cys-73, and Cys-84–Cys-94. Intrachain disulfides connect Cys-20–Cys-51, Cys-30–Cys-41, Cys-63–Cys-94, and Cys-73–Cys-84.

The protein belongs to the complex I NDUFA8 subunit family. As to quaternary structure, complex I is composed of about 45 different subunits.

The protein localises to the mitochondrion inner membrane. Its subcellular location is the mitochondrion intermembrane space. Functionally, accessory subunit of the mitochondrial membrane respiratory chain NADH dehydrogenase (Complex I), that is believed not to be involved in catalysis. Complex I functions in the transfer of electrons from NADH to the respiratory chain. The immediate electron acceptor for the enzyme is believed to be ubiquinone. The chain is NADH dehydrogenase [ubiquinone] 1 alpha subcomplex subunit 8 (ndufa8) from Dictyostelium discoideum (Social amoeba).